A 361-amino-acid polypeptide reads, in one-letter code: S-adenosylmethionine:tRNA ribosyltransferase-isomerase (361 aa).

This sequence belongs to the QueA family. Monomer.

The protein localises to the cytoplasm. It carries out the reaction 7-aminomethyl-7-carbaguanosine(34) in tRNA + S-adenosyl-L-methionine = epoxyqueuosine(34) in tRNA + adenine + L-methionine + 2 H(+). Its pathway is tRNA modification; tRNA-queuosine biosynthesis. Functionally, transfers and isomerizes the ribose moiety from AdoMet to the 7-aminomethyl group of 7-deazaguanine (preQ1-tRNA) to give epoxyqueuosine (oQ-tRNA). The polypeptide is S-adenosylmethionine:tRNA ribosyltransferase-isomerase (Actinobacillus pleuropneumoniae serotype 3 (strain JL03)).